A 946-amino-acid polypeptide reads, in one-letter code: Histone-lysine N-methyltransferase, H3 lysine-79 specific (946 aa).

Positions 1–18 are enriched in basic and acidic residues; the sequence is MSEADAGARDESPSRTAE. The disordered stretch occupies residues 1-28; that stretch reads MSEADAGARDESPSRTAEEPAAAMRIKE. The DOT1 domain maps to 54 to 369; the sequence is QGKTLRLPGN…KLIKYYEDQR (316 aa). Residues 173 to 176, 196 to 205, E223, and 259 to 260 contribute to the S-adenosyl-L-methionine site; these read YGET, FVDLGSGIGQ, and DF. The segment covering 368 to 409 has biased composition (basic and acidic residues); it reads QRRRQEVKSSREGSEISDGRDMGLKKRKSQRESSVHPDKLQK. Disordered stretches follow at residues 368–577 and 849–905; these read QRRR…HGGG and PTAS…GATE. Positions 410 to 422 are enriched in polar residues; that stretch reads TEQAAASSHQSPK. A compositionally biased stretch (basic and acidic residues) spans 464-484; sequence GKDREKEKEKKKNKIYEEKKV. 3 stretches are compositionally biased toward low complexity: residues 491–502, 512–528, and 855–864; these read KSSSSRYSSETP, NSISHSSDVIRPSQPKA, and SKVSPSSSSS. Over residues 880–903 the composition is skewed to gly residues; that stretch reads GAGGGGKRGTSGGRKSDGGGGGGA.

Belongs to the class I-like SAM-binding methyltransferase superfamily. DOT1 family. Interacts with zfp-1 (via C-terminus) to form a heterodimer known as the zfp-1-dot-1.1 complex or DotCom complex.

Its subcellular location is the nucleus. The protein resides in the chromosome. The enzyme catalyses L-lysyl(79)-[histone H3] + 3 S-adenosyl-L-methionine = N(6),N(6),N(6)-trimethyl-L-lysyl(79)-[histone H3] + 3 S-adenosyl-L-homocysteine + 3 H(+). In terms of biological role, histone methyltransferase, which in complex with zfp-1, methylates 'Lys-79' of histone H3 to activate transcription. During stress, the zfp-1-dot-1.1 complex also plays a role in the deubiquitination of histone H2B sites, which negatively modulates the RNA polymerase II-induced transcription of highly expressed genes. Involved in controlling tissue-specific gene expression, particularly in the epidermis. The chain is Histone-lysine N-methyltransferase, H3 lysine-79 specific from Caenorhabditis elegans.